A 199-amino-acid chain; its full sequence is MSNLENLTSKIIEDANKEAEKLLSEAKKEENKIVDEKIKKANKAKEQIIERAKRESRTKAERVISNAHLKVRNNKLEAKQEMINKVFDKAVIKLQNLSKDEYLNFVKSSILSLDIEGDEEIIVSPNDKDKIDISLMLTLNNQLKAKGKKALLKISNENRNIKGGFILYKNGIEINNSFEALVDSLRDELEQEIIEALFS.

The protein belongs to the V-ATPase E subunit family.

In terms of biological role, produces ATP from ADP in the presence of a proton gradient across the membrane. The sequence is that of V-type proton ATPase subunit E from Clostridium botulinum (strain 657 / Type Ba4).